The primary structure comprises 114 residues: MNVRANRVSEQMKKELGDILNRKIKDPRLGFVTVTGVDVTGDLQEAKVFISILGTDKEKENTLLALAKAHGFIRSEIGRRIRLRKVPEMSFEIDNSIAYGNRIDELLRDLNNDQ.

It belongs to the RbfA family. Monomer. Binds 30S ribosomal subunits, but not 50S ribosomal subunits or 70S ribosomes.

It is found in the cytoplasm. In terms of biological role, one of several proteins that assist in the late maturation steps of the functional core of the 30S ribosomal subunit. Associates with free 30S ribosomal subunits (but not with 30S subunits that are part of 70S ribosomes or polysomes). Required for efficient processing of 16S rRNA. May interact with the 5'-terminal helix region of 16S rRNA. In Listeria monocytogenes serotype 4b (strain F2365), this protein is Ribosome-binding factor A.